We begin with the raw amino-acid sequence, 852 residues long: MVDAVVTVFLEKTLNILEEKGRTVSDYRKQLEDLQSELKYMQSFLKDAERQKRTNETLRTLVADLRELVYEAEDILVDCQLADGDDGNEQRSSNAWLSRLHPARVPLQYKKSKRLQEINERITKIKSQVEPYFEFITPSNVGRDNGTDRWSSPVYDHTQVVGLEGDKRKIKEWLFRSNDSQLLIMAFVGMGGLGKTTIAQEVFNDKEIEHRFERRIWVSVSQTFTEEQIMRSILRNLGDASVGDDIGTLLRKIQQYLLGKRYLIVMDDVWDKNLSWWDKIYQGLPRGQGGSVIVTTRSESVAKRVQARDDKTHRPELLSPDNSWLLFCNVAFAANDGTCERPELEDVGKEIVTKCKGLPLTIKAVGGLLLCKDHVYHEWRRIAEHFQDELRGNTSETDNVMSSLQLSYDELPSHLKSCILTLSLYPEDCVIPKQQLVHGWIGEGFVMWRNGRSATESGEDCFSGLTNRCLIEVVDKTYSGTIITCKIHDMVRDLVIDIAKKDSFSNPEGLNCRHLGISGNFDEKQIKVNHKLRGVVSTTKTGEVNKLNSDLAKKFTDCKYLRVLDISKSIFDAPLSEILDEIASLQHLACLSLSNTHPLIQFPRSMEDLHNLQILDASYCQNLKQLQPCIVLFKKLLVLDMTNCGSLECFPKGIGSLVKLEVLLGFKPARSNNGCKLSEVKNLTNLRKLGLSLTRGDQIEEEELDSLINLSKLMSISINCYDSYGDDLITKIDALTPPHQLHELSLQFYPGKSSPSWLSPHKLPMLRYMSICSGNLVKMQEPFWGNENTHWRIEGLMLSSLSDLDMDWEVLQQSMPYLRTVTANWCPELESFAIEDVGFRGGVWMKTPLHRT.

The stretch at leucine 17–leucine 68 forms a coiled coil. Residues arginine 149, valine 161, glycine 189–threonine 196, arginine 297, and lysine 363 contribute to the ADP site. In terms of domain architecture, NB-ARC spans glutamate 164–glutamate 410. 6 LRR repeats span residues cysteine 558 to glutamate 581, leucine 585 to leucine 609, phenylalanine 633 to leucine 657, leucine 683 to serine 706, leucine 763 to asparagine 786, and leucine 798 to asparagine 824.

It belongs to the disease resistance NB-LRR family. RPP13 subfamily. In terms of assembly, interacts with ZED1/ZRK5. Component of a stable high-order oligomeric complex made of RKS1 and RPP13L4/ZAR1 which recruits ZED1-related kinases (e.g. uridylylated PBL2 and acetylated ZED1/ZRK5) in the presence of ATP and pathogenic bacteria type III secreted effector (T3SE) proteins (e.g. Pseudomonas syringae HopZ1a and HopF2a and Xanthomonas campestris pv. campestris (Xcc) XopAC/AvrAC) to form a wheel-like pentameric resistosome; this complex triggers immunity toward pathogenic bacteria (e.g. X.campestris and P.syringae), especially in vascular tissues. Interacts with RKS1, ZED1/ZRK5, ZRK3, ZRK6 and ZRK15.

The protein resides in the cell membrane. It is found in the nucleus. Exhibits autoinhibition activity. CC-NB-LRR receptor-like protein required for recognition of pathogenic bacteria type III effectors (T3E) such as Pseudomonas syringae HopZ1a and HopF2a and Xanthomonas campestris pv. campestris (Xcc) XopAC/AvrAC; this recognition requires ZED1-related kinases (e.g. PBL2, ZRK3 and ZED1/ZRK5). Confers allele-specific recognition and virulence attenuation of HopZ1a. Immunity mediated by RPP13L4/ZAR1 is independent of several genes required by other resistance protein signaling pathways such as NDR1 and RAR1. Together with ZED1/ZRK5, involved in the regulation of the ambient temperature-sensitive intersection of growth and immune response in the absence of pathogens. The chain is Disease resistance RPP13-like protein 4 (RPP13L4) from Arabidopsis thaliana (Mouse-ear cress).